The sequence spans 40 residues: ATCDLLSGTGIKHSACAAHCLLRGNRGGYCNGRAICVCRN.

3 disulfide bridges follow: Cys-3–Cys-30, Cys-16–Cys-36, and Cys-20–Cys-38.

Belongs to the invertebrate defensin family. Type 1 subfamily. The disulfide bonds are essential for antimicrobial activity. In terms of tissue distribution, larval fat body, hemolymph and salivary glands (at protein level).

The protein localises to the secreted. Shows strong antibacterial activity against the Gram-positive bacterium M.luteus. Also shows antibacterial activity against the Gram-positive bacteria E.fecalis, S.aureus, S.carnosus, S.pneumoniae and S.pyogenes and against a number of methicillin-resistant S.aureus and glycopeptide-intermediate S.aureus isolates. Does not show antibacterial activity against Gram-negative bacteria or antifungal activity against C.utilis. Shows slight antifungal activity against C.albicans. This Lucilia cuprina (Green bottle fly) protein is Lucifensin.